The primary structure comprises 407 residues: Na(+)-translocating NADH-quinone reductase subunit F (407 aa).

A helical transmembrane segment spans residues 3-23 (IILGVVMFTLIVLALVLVILF). Positions 32 to 126 (GDITISINGD…DMDIELPEEI (95 aa)) constitute a 2Fe-2S ferredoxin-type domain. [2Fe-2S] cluster contacts are provided by cysteine 69, cysteine 75, cysteine 78, and cysteine 110. The 141-residue stretch at 129 to 269 (VKKWECTVIS…SGPFGEFFAK (141 aa)) folds into the FAD-binding FR-type domain. Residues 272–389 (DAEMVFIGGG…PMMNAAVIGM (118 aa)) form a catalytic region.

This sequence belongs to the NqrF family. Composed of six subunits; NqrA, NqrB, NqrC, NqrD, NqrE and NqrF. The cofactor is [2Fe-2S] cluster. Requires FAD as cofactor.

It is found in the cell inner membrane. It carries out the reaction a ubiquinone + n Na(+)(in) + NADH + H(+) = a ubiquinol + n Na(+)(out) + NAD(+). Functionally, NQR complex catalyzes the reduction of ubiquinone-1 to ubiquinol by two successive reactions, coupled with the transport of Na(+) ions from the cytoplasm to the periplasm. The first step is catalyzed by NqrF, which accepts electrons from NADH and reduces ubiquinone-1 to ubisemiquinone by a one-electron transfer pathway. This is Na(+)-translocating NADH-quinone reductase subunit F from Vibrio vulnificus (strain CMCP6).